Consider the following 397-residue polypeptide: MERFKKASSIIETLKQQGHEAYFVGGSVRDLIIDRPIGDIDIATSALPEEVMAIFPRNVPVGLEHGTVIVVENGEPYEVTTFRTESEYEDFRRPSSVQFVRSLEEDLKRRDFTMNAIAMTEEGKMVDLFAGQEAIQQREIVTVGNAADRFQEDALRMMRGIRFVSTLGFSLEMKTKQAIETYGHLLEHIAIERITVEFEKLLTGTYCVKGLKELVETKLFSHLPYLQMSEERLLKATQYKWDSFETDIEAWAFFLYCIGEEHPSVFLRQWKFSNKKIKDIVAVLLTIRTRKEKDWDTVLLYKTGIHIAEMAERVYEAMIERYDPTSVERVQSMFHALPIQERQEMNVTGNDLLNWANKKPGPWVAEMLQKIEEAIVQGNVVNEKERIREWLQGCNLL.

Gly-26 and Arg-29 together coordinate ATP. Positions 26 and 29 each coordinate CTP. Asp-39 and Asp-41 together coordinate Mg(2+). ATP is bound by residues Arg-110, Asp-153, Arg-156, Arg-159, and Arg-162. CTP-binding residues include Arg-110, Asp-153, Arg-156, Arg-159, and Arg-162.

It belongs to the tRNA nucleotidyltransferase/poly(A) polymerase family. Bacterial CCA-adding enzyme type 3 subfamily. Homodimer. Mg(2+) serves as cofactor.

The enzyme catalyses a tRNA precursor + 2 CTP + ATP = a tRNA with a 3' CCA end + 3 diphosphate. It catalyses the reaction a tRNA with a 3' CCA end + 2 CTP + ATP = a tRNA with a 3' CCACCA end + 3 diphosphate. Catalyzes the addition and repair of the essential 3'-terminal CCA sequence in tRNAs without using a nucleic acid template. Adds these three nucleotides in the order of C, C, and A to the tRNA nucleotide-73, using CTP and ATP as substrates and producing inorganic pyrophosphate. tRNA 3'-terminal CCA addition is required both for tRNA processing and repair. Also involved in tRNA surveillance by mediating tandem CCA addition to generate a CCACCA at the 3' terminus of unstable tRNAs. While stable tRNAs receive only 3'-terminal CCA, unstable tRNAs are marked with CCACCA and rapidly degraded. The sequence is that of CCA-adding enzyme from Bacillus cereus (strain B4264).